An 832-amino-acid polypeptide reads, in one-letter code: Protein P (832 aa).

The tract at residues 1–177 (MPLSYQHFRK…FCGSPYSWEQ (177 aa)) is terminal protein domain (TP). Positions 178–335 (ELQHGAESFH…YCLSHIVNLL (158 aa)) are spacer. A compositionally biased stretch (polar residues) spans 186 to 206 (FHQQSSGILSRPSVGSSLQSK). Disordered regions lie at residues 186–255 (FHQQ…GHNA) and 280–305 (TSEN…RSQS). Residues 210–220 (SRLGLQSQQGH) are compositionally biased toward low complexity. The segment at 336 to 679 (EDWGPCAEHG…YLNLYPVARQ (344 aa)) is polymerase/reverse transcriptase domain (RT). The region spanning 346–589 (EHHIRIPRTP…YSLNFMGYVI (244 aa)) is the Reverse transcriptase domain. Mg(2+) is bound by residues Asp418, Asp540, and Asp541.

This sequence belongs to the hepadnaviridae P protein family.

The catalysed reaction is DNA(n) + a 2'-deoxyribonucleoside 5'-triphosphate = DNA(n+1) + diphosphate. It catalyses the reaction Endonucleolytic cleavage to 5'-phosphomonoester.. With respect to regulation, activated by host HSP70 and HSP40 in vitro to be able to bind the epsilon loop of the pgRNA. Because deletion of the RNase H region renders the protein partly chaperone-independent, the chaperones may be needed indirectly to relieve occlusion of the RNA-binding site by this domain. Inhibited by several reverse-transcriptase inhibitors: Lamivudine, Adefovir and Entecavir. Its function is as follows. Multifunctional enzyme that converts the viral RNA genome into dsDNA in viral cytoplasmic capsids. This enzyme displays a DNA polymerase activity that can copy either DNA or RNA templates, and a ribonuclease H (RNase H) activity that cleaves the RNA strand of RNA-DNA heteroduplexes in a partially processive 3'- to 5'-endonucleasic mode. Neo-synthesized pregenomic RNA (pgRNA) are encapsidated together with the P protein, and reverse-transcribed inside the nucleocapsid. Initiation of reverse-transcription occurs first by binding the epsilon loop on the pgRNA genome, and is initiated by protein priming, thereby the 5'-end of (-)DNA is covalently linked to P protein. Partial (+)DNA is synthesized from the (-)DNA template and generates the relaxed circular DNA (RC-DNA) genome. After budding and infection, the RC-DNA migrates in the nucleus, and is converted into a plasmid-like covalently closed circular DNA (cccDNA). The activity of P protein does not seem to be necessary for cccDNA generation, and is presumably released from (+)DNA by host nuclear DNA repair machinery. In Hepatitis B virus genotype D subtype ayw (isolate Australia/AustKW/1991) (HBV-D), this protein is Protein P.